Consider the following 157-residue polypeptide: Ribosomal RNA large subunit methyltransferase H (157 aa).

Residues Leu73, Gly105, and 124–129 (LSRMTF) each bind S-adenosyl-L-methionine.

This sequence belongs to the RNA methyltransferase RlmH family. In terms of assembly, homodimer.

It is found in the cytoplasm. The enzyme catalyses pseudouridine(1915) in 23S rRNA + S-adenosyl-L-methionine = N(3)-methylpseudouridine(1915) in 23S rRNA + S-adenosyl-L-homocysteine + H(+). Functionally, specifically methylates the pseudouridine at position 1915 (m3Psi1915) in 23S rRNA. This chain is Ribosomal RNA large subunit methyltransferase H, found in Porphyromonas gingivalis (strain ATCC 33277 / DSM 20709 / CIP 103683 / JCM 12257 / NCTC 11834 / 2561).